The chain runs to 432 residues: Adenylosuccinate synthetase (432 aa).

GTP-binding positions include 13–19 and 41–43; these read GDEGKGK and GHT. Residue D14 is the Proton acceptor of the active site. Residues D14 and G41 each coordinate Mg(2+). IMP contacts are provided by residues 14–17, 39–42, T130, R144, Q225, T240, and R304; these read DEGK and NAGH. H42 serves as the catalytic Proton donor. 300–306 is a substrate binding site; it reads ATTGRKR. Residues R306, 332–334, and 415–417 each bind GTP; these read KLD and STG.

This sequence belongs to the adenylosuccinate synthetase family. As to quaternary structure, homodimer. The cofactor is Mg(2+).

Its subcellular location is the cytoplasm. The enzyme catalyses IMP + L-aspartate + GTP = N(6)-(1,2-dicarboxyethyl)-AMP + GDP + phosphate + 2 H(+). It participates in purine metabolism; AMP biosynthesis via de novo pathway; AMP from IMP: step 1/2. Its function is as follows. Plays an important role in the de novo pathway of purine nucleotide biosynthesis. Catalyzes the first committed step in the biosynthesis of AMP from IMP. The chain is Adenylosuccinate synthetase from Vibrio cholerae serotype O1 (strain M66-2).